The sequence spans 979 residues: Mast/stem cell growth factor receptor Kit (979 aa).

A signal peptide spans 1–24 (MRGARGAWDLLCVLLVLLRGQTAT). Residues 25-527 (SQPSASPGEP…QIQAHTLFTP (503 aa)) are Extracellular-facing. 3 consecutive Ig-like C2-type domains span residues 31–117 (PGEP…DPAK), 126–210 (FGKE…AAIK), and 217–315 (VPET…EKGF). Disulfide bonds link Cys58–Cys98, Cys137–Cys187, Cys152–Cys184, and Cys234–Cys293. A glycan (N-linked (GlcNAc...) asparagine) is linked at Asn146. N-linked (GlcNAc...) asparagine glycans are attached at residues Asn296, Asn303, Asn323, Asn355, Asn370, Asn466, and Asn489. Ig-like C2-type domains follow at residues 324-417 (TTVF…TKPE) and 420-514 (TYDR…FKGN). An intrachain disulfide couples Cys431 to Cys494. Residues 528-548 (LLIGFVVAAGAMGIIVMVLTY) traverse the membrane as a helical segment. At 549-979 (KYLQKPMYEV…TQPLLVHEDA (431 aa)) the chain is on the cytoplasmic side. A phosphotyrosine; by autocatalysis mark is found at Tyr550 and Tyr556. Residue Tyr571 coordinates Mg(2+). 2 positions are modified to phosphotyrosine: Tyr571 and Tyr573. The important for interaction with phosphotyrosine-binding proteins stretch occupies residues 571–573 (YVY). One can recognise a Protein kinase domain in the interval 592 to 939 (LSFGKTLGAG…ISDSTKHIYS (348 aa)). Residues 599–606 (GAGAFGKV), Lys626, and 674–680 (EYCCYGD) contribute to the ATP site. A Phosphotyrosine modification is found at Tyr706. Ser720 carries the post-translational modification Phosphoserine. Tyr723 and Tyr732 each carry phosphotyrosine; by autocatalysis. Ser743 and Ser748 each carry phosphoserine; by PKC/PRKCA. Asp794 acts as the Proton acceptor in catalysis. Arg798 is an ATP binding site. Residues Asn799 and Asp812 each contribute to the Mg(2+) site. Residue Ser823 is modified to Phosphoserine. Tyr825 is subject to Phosphotyrosine; by autocatalysis. Ser893 bears the Phosphoserine mark. Position 902 is a phosphotyrosine; by autocatalysis (Tyr902). A Phosphotyrosine modification is found at Tyr938. Position 962 is a phosphoserine (Ser962).

The protein belongs to the protein kinase superfamily. Tyr protein kinase family. CSF-1/PDGF receptor subfamily. In terms of assembly, monomer in the absence of bound KITLG/SCF. Homodimer in the presence of bound KITLG/SCF, forming a heterotetramer with two KITLG/SCF molecules. Interacts (via phosphorylated tyrosine residues) with the adapter proteins GRB2 and GRB7 (via SH2 domain), and SH2B2/APS. Interacts (via C-terminus) with MPDZ (via the tenth PDZ domain). Interacts (via phosphorylated tyrosine residues) with the protein phosphatases PTPN6/SHP-1 (via SH2 domain), PTPN11/SHP-2 (via SH2 domain) and PTPRU. Interacts with DOK1 and TEC. Interacts with the protein kinase FES/FPS. Interacts with PLCG1. Interacts (via phosphorylated tyrosine residues) with PIK3R1 and PIK3 catalytic subunit. Interacts (KITLG/SCF-bound) with IL1RL1. Interacts with IL1RAP (independent of stimulation with KITLG/SCF). A mast cell-specific KITLG/SCF-induced interleukin-33 signaling complex contains IL1RL1, IL1RAP, KIT and MYD88. Post-translationally, ubiquitinated by SOCS6. KIT is rapidly ubiquitinated after autophosphorylation induced by KITLG/SCF binding, leading to internalization and degradation. Autophosphorylated on tyrosine residues. KITLG/SCF binding promotes autophosphorylation of isoform 1 and isoform 2. Isoform 1 shows low levels of tyrosine phosphorylation in the absence of added KITLG/SCF, while isoform 2 requires stimulation by KITLG/SCF for phosphorylation (in vitro). Phosphorylation of Tyr-573 is required for interaction with PTPN6/SHP-1. Phosphorylation of Tyr-571 is required for interaction with PTPN11/SHP-2. Phosphorylated tyrosine residues are important for interaction with specific binding partners. In terms of tissue distribution, isoform 1 and isoform 2 are detected in bone marrow cells, spermatogonia and spermatocytes, but not in round spermatids, elongating spermatids and spermatozoa. Isoform 3 is detected in round spermatids, elongating spermatids and spermatozoa, but not in spermatogonia and spermatocytes (at protein level). Isoform 1 is widely expressed and detected in fetal liver and bone marrow. Isoform 3 is detected in bone marrow cells enriched in hematopoietic stem cells.

It localises to the cell membrane. The protein resides in the cytoplasm. It catalyses the reaction L-tyrosyl-[protein] + ATP = O-phospho-L-tyrosyl-[protein] + ADP + H(+). Present in an inactive conformation in the absence of bound ligand. KITLG/SCF binding leads to dimerization and activation by autophosphorylation. In terms of biological role, tyrosine-protein kinase that acts as a cell-surface receptor for the cytokine KITLG/SCF and plays an essential role in the regulation of cell survival and proliferation, hematopoiesis, stem cell maintenance, gametogenesis, mast cell development, migration and function, and in melanogenesis. In response to KITLG/SCF binding, KIT can activate several signaling pathways. Phosphorylates PIK3R1, PLCG1, SH2B2/APS and CBL. Activates the AKT1 signaling pathway by phosphorylation of PIK3R1, the regulatory subunit of phosphatidylinositol 3-kinase. Activated KIT also transmits signals via GRB2 and activation of RAS, RAF1 and the MAP kinases MAPK1/ERK2 and/or MAPK3/ERK1. Promotes activation of STAT family members STAT1, STAT3, STAT5A and STAT5B. Activation of PLCG1 leads to the production of the cellular signaling molecules diacylglycerol and inositol 1,4,5-trisphosphate. KIT signaling is modulated by protein phosphatases, and by rapid internalization and degradation of the receptor. Activated KIT promotes phosphorylation of the protein phosphatases PTPN6/SHP-1 and PTPRU, and of the transcription factors STAT1, STAT3, STAT5A and STAT5B. Promotes phosphorylation of PIK3R1, CBL, CRK (isoform Crk-II), LYN, MAPK1/ERK2 and/or MAPK3/ERK1, PLCG1, SRC and SHC1. The chain is Mast/stem cell growth factor receptor Kit (Kit) from Mus musculus (Mouse).